A 433-amino-acid polypeptide reads, in one-letter code: Protein CLP1 homolog (433 aa).

ATP-binding positions include Glu-22, Arg-61, and 128-133; that span reads DVGKTT.

This sequence belongs to the Clp1 family. Clp1 subfamily.

Its subcellular location is the nucleus. Its function is as follows. Required for endonucleolytic cleavage during polyadenylation-dependent pre-mRNA 3'-end formation. The polypeptide is Protein CLP1 homolog (Brugia malayi (Filarial nematode worm)).